Reading from the N-terminus, the 552-residue chain is Transcription factor kayak (552 aa).

Disordered stretches follow at residues 110–145 (LAQG…TDST) and 177–234 (GAAS…KRRV). The segment covering 111–127 (AQGSDSEDSNASYNDTQ) has biased composition (polar residues). The span at 135–145 (TDTSSAHTDST) shows a compositional bias: low complexity. The segment covering 177–192 (GAASVGSSNANTSNTP) has biased composition (polar residues). Positions 212–275 (EQKRAVRRER…NQLEYCLAAH (64 aa)) constitute a bZIP domain. The basic motif stretch occupies residues 214 to 233 (KRAVRRERNKQAAARCRKRR). The leucine-zipper stretch occupies residues 240-247 (LTEEVEQL). Low complexity predominate over residues 304 to 325 (AGSSGSGASSHHNHNSNDSSNG). Disordered regions lie at residues 304-346 (AGSS…PLDL), 365-390 (LDGA…TLPP), and 514-552 (GGTG…LVSL). The segment covering 333–343 (TLNSTGRSNSP) has biased composition (polar residues). Serine 342 is modified (phosphoserine).

Belongs to the bZIP family. Fos subfamily. As to quaternary structure, homodimer. Heterodimer with Jra. The kay-Jra heterodimer binds more stably to the AP-1 site than either of the two proteins alone.

It localises to the nucleus. Its function is as follows. Developmentally regulated transcription factor AP-1 binds and recognizes the enhancer DNA sequence: 5'-TGA[CG]TCA-3'. May play a role in the function or determination of a particular subset of cells in the developing embryo. It is able to carry out its function either independently of or in conjunction with Jra. The polypeptide is Transcription factor kayak (Drosophila yakuba (Fruit fly)).